We begin with the raw amino-acid sequence, 84 residues long: UPF0473 protein CKL_1327 (84 aa).

Belongs to the UPF0473 family.

In Clostridium kluyveri (strain ATCC 8527 / DSM 555 / NBRC 12016 / NCIMB 10680 / K1), this protein is UPF0473 protein CKL_1327.